We begin with the raw amino-acid sequence, 462 residues long: tRNA(Ile2) 2-agmatinylcytidine synthetase TiaS (462 aa).

Belongs to the TiaS family.

It localises to the cytoplasm. The enzyme catalyses cytidine(34) in tRNA(Ile2) + agmatine + ATP + H2O = 2-agmatinylcytidine(34) in tRNA(Ile2) + AMP + 2 phosphate + 2 H(+). Functionally, ATP-dependent agmatine transferase that catalyzes the formation of 2-agmatinylcytidine (agm2C) at the wobble position (C34) of tRNA(Ile2), converting the codon specificity from AUG to AUA. This Haloquadratum walsbyi (strain DSM 16790 / HBSQ001) protein is tRNA(Ile2) 2-agmatinylcytidine synthetase TiaS.